The following is a 261-amino-acid chain: Proline-rich protein HaeIII subfamily 1 (261 aa).

An N-terminal signal peptide occupies residues 1–15 (MLVVLFTVALLALSS). The disordered stretch occupies residues 15–261 (SAQGPREENQ…PPQGRPQGPR (247 aa)). 2 stretches are compositionally biased toward pro residues: residues 32–44 (QRPP…PRPP) and 51–237 (GPPP…PPTG). A compositionally biased stretch (low complexity) spans 238-261 (GPQQTPPLAGNTQGPPQGRPQGPR).

The protein resides in the secreted. The protein is Proline-rich protein HaeIII subfamily 1 (Prh1) of Mus musculus (Mouse).